The primary structure comprises 764 residues: Elongation factor G, mitochondrial (764 aa).

Residues methionine 1–arginine 23 constitute a mitochondrion transit peptide. The 282-residue stretch at alanine 56 to serine 337 folds into the tr-type G domain. GTP is bound by residues alanine 65–threonine 72, aspartate 136–histidine 140, and asparagine 190–aspartate 193.

The protein belongs to the TRAFAC class translation factor GTPase superfamily. Classic translation factor GTPase family. EF-G/EF-2 subfamily.

Its subcellular location is the mitochondrion. It participates in protein biosynthesis; polypeptide chain elongation. Its function is as follows. Mitochondrial GTPase that catalyzes the GTP-dependent ribosomal translocation step during translation elongation. During this step, the ribosome changes from the pre-translocational (PRE) to the post-translocational (POST) state as the newly formed A-site-bound peptidyl-tRNA and P-site-bound deacylated tRNA move to the P and E sites, respectively. Catalyzes the coordinated movement of the two tRNA molecules, the mRNA and conformational changes in the ribosome. The chain is Elongation factor G, mitochondrial from Yarrowia lipolytica (strain CLIB 122 / E 150) (Yeast).